The sequence spans 359 residues: Nicotinate-nucleotide--dimethylbenzimidazole phosphoribosyltransferase (359 aa).

Glutamate 318 serves as the catalytic Proton acceptor.

It belongs to the CobT family. In terms of assembly, homodimer.

The catalysed reaction is 5,6-dimethylbenzimidazole + nicotinate beta-D-ribonucleotide = alpha-ribazole 5'-phosphate + nicotinate + H(+). It functions in the pathway nucleoside biosynthesis; alpha-ribazole biosynthesis; alpha-ribazole from 5,6-dimethylbenzimidazole: step 1/2. In terms of biological role, catalyzes the synthesis of alpha-ribazole-5'-phosphate from nicotinate mononucleotide (NAMN) and 5,6-dimethylbenzimidazole (DMB). The protein is Nicotinate-nucleotide--dimethylbenzimidazole phosphoribosyltransferase of Escherichia coli (strain ATCC 8739 / DSM 1576 / NBRC 3972 / NCIMB 8545 / WDCM 00012 / Crooks).